Consider the following 230-residue polypeptide: Biosynthetic peptidoglycan transglycosylase (230 aa).

The helical transmembrane segment at 11-31 threads the bilayer; sequence VLLVLVALFVLYQLWIFTLVL.

It belongs to the glycosyltransferase 51 family.

The protein resides in the cell inner membrane. The catalysed reaction is [GlcNAc-(1-&gt;4)-Mur2Ac(oyl-L-Ala-gamma-D-Glu-L-Lys-D-Ala-D-Ala)](n)-di-trans,octa-cis-undecaprenyl diphosphate + beta-D-GlcNAc-(1-&gt;4)-Mur2Ac(oyl-L-Ala-gamma-D-Glu-L-Lys-D-Ala-D-Ala)-di-trans,octa-cis-undecaprenyl diphosphate = [GlcNAc-(1-&gt;4)-Mur2Ac(oyl-L-Ala-gamma-D-Glu-L-Lys-D-Ala-D-Ala)](n+1)-di-trans,octa-cis-undecaprenyl diphosphate + di-trans,octa-cis-undecaprenyl diphosphate + H(+). Its pathway is cell wall biogenesis; peptidoglycan biosynthesis. Functionally, peptidoglycan polymerase that catalyzes glycan chain elongation from lipid-linked precursors. This chain is Biosynthetic peptidoglycan transglycosylase, found in Aromatoleum aromaticum (strain DSM 19018 / LMG 30748 / EbN1) (Azoarcus sp. (strain EbN1)).